Reading from the N-terminus, the 51-residue chain is Large ribosomal subunit protein eL39 (51 aa).

It belongs to the eukaryotic ribosomal protein eL39 family.

In Staphylothermus marinus (strain ATCC 43588 / DSM 3639 / JCM 9404 / F1), this protein is Large ribosomal subunit protein eL39.